The following is a 529-amino-acid chain: MFS glucose transporter mfs1 (529 aa).

12 helical membrane passes run 7-27 (VYFLCGFATLGGGLFGFDISS), 52-72 (SITCAMPFGSLVGALCSSFIA), 86-106 (ILWIIGSIFMCASNGIPLLVV), 109-129 (VIAGGCVGIASAMVPVYQAEI), 138-158 (VISLQQWAITWGILIQYFIQY), 179-199 (IPWGIQIVPGVILFFGMFLFP), 272-292 (LQMWSQLCGMNVMMYYIVYIM), 301-321 (LLTASIQYILNTALTLPAIIY), 330-350 (AILIGFFLQAIFLYLEGGLQG), 375-395 (AVGKAIIALSYLFVCSFATTI), 415-439 (AVSLATASNWIWNCLLALFVPPLLW), and 446-464 (YMIFAAFNTAAFIHMFLTA).

Belongs to the major facilitator superfamily. Sugar transporter (TC 2.A.1.1) family.

Its subcellular location is the membrane. Its function is as follows. Probable MFS glucose transporter; part of the gene cluster 27 that mediates the biosynthesis of asparasone A, a sclerotium-specific anthraquinone pigment important for sclerotial survival. The polypeptide is MFS glucose transporter mfs1 (Aspergillus flavus (strain ATCC 200026 / FGSC A1120 / IAM 13836 / NRRL 3357 / JCM 12722 / SRRC 167)).